The following is a 204-amino-acid chain: CASP-like protein 2U2 (204 aa).

Over 1-36 (MGVLGGDAHVPIGSQVSPGSVVVTNNESFGHRKLLK) the chain is Cytoplasmic. Residues 37-57 (GVDFLVRIKAFAFCLAVIVLL) traverse the membrane as a helical segment. Over 58 to 84 (KNNVQTTVIAPGIVLQAKYNNTKAPVS) the chain is Extracellular. N-linked (GlcNAc...) asparagine glycosylation is present at asparagine 77. Residues 85-105 (LLVLASICCGYAFLQAVVSLL) form a helical membrane-spanning segment. Over 106–117 (SFIRDKRVLNNT) the chain is Cytoplasmic. The helical transmembrane segment at 118–138 (VLAWLTFLLDQVLTYLLLGSA) threads the bilayer. At 139–170 (AATAEAAYIAKRGEDKVQWKAVCGPFKRFCDH) the chain is on the extracellular side. The helical transmembrane segment at 171-191 (FAATVFLSFIAVIAFAVSAAI) threads the bilayer. Over 192 to 204 (SAYYLFRKSKGFK) the chain is Cytoplasmic.

This sequence belongs to the Casparian strip membrane proteins (CASP) family. In terms of assembly, homodimer and heterodimers.

It is found in the cell membrane. This is CASP-like protein 2U2 from Selaginella moellendorffii (Spikemoss).